The primary structure comprises 215 residues: Large ribosomal subunit protein uL3c (215 aa).

The tract at residues 132–151 is disordered; it reads RGAMSHGSKSHRRPGSIGAG.

It belongs to the universal ribosomal protein uL3 family. As to quaternary structure, part of the 50S ribosomal subunit.

Its subcellular location is the plastid. It localises to the chloroplast. One of the primary rRNA binding proteins, it binds directly near the 3'-end of the 23S rRNA, where it nucleates assembly of the 50S subunit. The chain is Large ribosomal subunit protein uL3c (rpl3) from Cyanidium caldarium (Red alga).